A 198-amino-acid chain; its full sequence is dITP/XTP pyrophosphatase (198 aa).

7-12 (THNPHK) provides a ligand contact to substrate. Residues Glu-40 and Asp-69 each contribute to the Mg(2+) site. Asp-69 functions as the Proton acceptor in the catalytic mechanism. Substrate is bound by residues Thr-70, 151–154 (FGYD), Lys-174, and 179–180 (HR).

Belongs to the HAM1 NTPase family. Homodimer. Mg(2+) is required as a cofactor.

It catalyses the reaction XTP + H2O = XMP + diphosphate + H(+). The enzyme catalyses dITP + H2O = dIMP + diphosphate + H(+). It carries out the reaction ITP + H2O = IMP + diphosphate + H(+). In terms of biological role, pyrophosphatase that catalyzes the hydrolysis of nucleoside triphosphates to their monophosphate derivatives, with a high preference for the non-canonical purine nucleotides XTP (xanthosine triphosphate), dITP (deoxyinosine triphosphate) and ITP. Seems to function as a house-cleaning enzyme that removes non-canonical purine nucleotides from the nucleotide pool, thus preventing their incorporation into DNA/RNA and avoiding chromosomal lesions. This is dITP/XTP pyrophosphatase from Thermoanaerobacter sp. (strain X514).